A 619-amino-acid polypeptide reads, in one-letter code: Guanylate cyclase soluble subunit beta-1 (619 aa).

Residue His-105 coordinates heme. The Guanylate cyclase domain maps to 421–554 (TILFSGIVGF…NTVNLTSRTE (134 aa)).

It belongs to the adenylyl cyclase class-4/guanylyl cyclase family. The active enzyme is formed by a heterodimer of an alpha and a beta subunit. Heterodimer with GUCY1A1. Can also form inactive homodimers in vitro. Heme is required as a cofactor. As to expression, detected in brain cortex and cerebellum (at protein level).

Its subcellular location is the cytoplasm. It carries out the reaction GTP = 3',5'-cyclic GMP + diphosphate. Its activity is regulated as follows. Activated by nitric oxide in the presence of magnesium or manganese ions. Mediates responses to nitric oxide (NO) by catalyzing the biosynthesis of the signaling molecule cGMP. The polypeptide is Guanylate cyclase soluble subunit beta-1 (Homo sapiens (Human)).